We begin with the raw amino-acid sequence, 505 residues long: MSFGSEHYLCSASSYRKVFGDGSRLSARLSGPGASGSFRSQSLSRSNVASTAACSSASSLGLGLAYRRLPASDGLDLSQAAARTNEYKIIRTNEKEQLQGLNDRFAVFIEKVHQLETQNRALEAELAALRQRHAEPSRVGELFQRELRELRAQLEEASSARAQALLERDGLAEEVQRLRARCEEESRGREGAERALKAQQRDVDGATLARLDLEKKVESLLDELAFVRQVHDEEVAELLATLQASSQAAAEVDVAVAKPDLTSALREIRAQYESLAAKNLQSAEEWYKSKFANLNEQAARSTEAIRASREEIHEYRRQLQARTIEIEGLRGANESLERQILELEERHSAEVAGYQDSIGQLESDLRNTKSEMARHLREYQDLLNVKMALDIEIAAYRKLLEGEETRFSTSGLSISGLNPLPNPSYLLPPRILSSTTSKVSSAGLSLKKEEEEEEEEEEGASKEVTKKTSKVGESFEETLEETVVSTKKTEKSTIEEITTSSSQKM.

Residues 1–87 are head; it reads MSFGSEHYLC…SQAAARTNEY (87 aa). Ser72 is modified (phosphoserine). A coil 1A region spans residues 88–129; the sequence is KIIRTNEKEQLQGLNDRFAVFIEKVHQLETQNRALEAELAAL. Positions 94-407 constitute an IF rod domain; it reads EKEQLQGLND…KLLEGEETRF (314 aa). The segment at 130 to 142 is linker 1; that stretch reads RQRHAEPSRVGEL. A coil 1B region spans residues 143-238; it reads FQRELRELRA…QVHDEEVAEL (96 aa). A Phosphoserine modification is found at Ser219. A linker 2 region spans residues 239–262; that stretch reads LATLQASSQAAAEVDVAVAKPDLT. The interval 263–408 is coil 2; it reads SALREIRAQY…LLEGEETRFS (146 aa). Lys290 is modified (N6-acetyllysine). A phosphoserine mark is found at Ser335, Ser474, and Ser502. The tail stretch occupies residues 409-505; the sequence is TSGLSISGLN…EITTSSSQKM (97 aa). The tract at residues 438–505 is disordered; sequence KVSSAGLSLK…EITTSSSQKM (68 aa). Low complexity predominate over residues 495–505; that stretch reads EEITTSSSQKM.

Belongs to the intermediate filament family. As to quaternary structure, forms homodimers (in vitro). Forms heterodimers with NEFL, NEFM or NEFH (in vitro). O-glycosylated. In terms of tissue distribution, expressed in the dorsal root ganglion neurons (at protein level).

Its function is as follows. Class-IV neuronal intermediate filament that is able to self-assemble. It is involved in the morphogenesis of neurons. It may form an independent structural network without the involvement of other neurofilaments or it may cooperate with NEFL to form the filamentous backbone to which NEFM and NEFH attach to form the cross-bridges. May also cooperate with the neuronal intermediate filament protein PRPH to form filamentous networks. The sequence is that of Alpha-internexin (Ina) from Rattus norvegicus (Rat).